We begin with the raw amino-acid sequence, 759 residues long: Forkhead box protein M1 (759 aa).

2 disordered regions span residues 1–54 (MRTS…AESS) and 94–165 (KGKE…QRQE). A compositionally biased stretch (polar residues) spans 36-54 (PGQQEPTQAQASQDVAESS). Low complexity predominate over residues 141–151 (LGPKPGAKGVP). Residues Lys200 and Lys324 each participate in a glycyl lysine isopeptide (Lys-Gly) (interchain with G-Cter in SUMO2) cross-link. Positions 234 to 326 (ERPPYSYMAM…LTLDQVFKPL (93 aa)) form a DNA-binding region, fork-head. The interval 328-349 (PGSPQSPEHLESQQKRPNPELR) is disordered. Ser330 carries the phosphoserine modification. The span at 335 to 349 (EHLESQQKRPNPELR) shows a compositional bias: basic and acidic residues. Residue Lys355 forms a Glycyl lysine isopeptide (Lys-Gly) (interchain with G-Cter in SUMO2) linkage. Phosphoserine; by CHEK2 is present on Ser375. Residues Lys421 and Lys439 each participate in a glycyl lysine isopeptide (Lys-Gly) (interchain with G-Cter in SUMO2) cross-link. Ser521 is modified (phosphoserine). Disordered stretches follow at residues 530–556 (LVTKRREKREVSRSRRKQHLQPPCLDE), 572–643 (MEIL…PQGA), and 681–706 (LASDPFSSSPPPHLEAKPGSPELQVP). Residues 531 to 542 (VTKRREKREVSR) are compositionally biased toward basic and acidic residues. Polar residues predominate over residues 604 to 613 (PVSSTPSKSV). Thr608 is modified (phosphothreonine; by CDK1). Position 624 is a phosphothreonine (Thr624). Ser726 and Ser735 each carry phosphoserine; by PLK1.

Phosphorylated in M (mitotic) phase. Phosphorylation by the checkpoint kinase CHEK2 in response to DNA damage increases the FOXM1 protein stability probably stimulating the transcription of genes involved in DNA repair. Phosphorylated by CDK1 in late S and G2 phases, creating docking sites for the POLO box domains of PLK1. Subsequently, PLK1 binds and phosphorylates FOXM1, leading to activation of transcriptional activity and subsequent enhanced expression of key mitotic regulators. Phosphorylated by GSK3B leading to ubiquitination and proteasomal degradation. In terms of tissue distribution, highly expressed in thymus and testis, but weakly in intestine and lung. Appears to be expressed only in adult organs containing proliferating/cycling cells or in response to growth factors.

It localises to the nucleus. In terms of biological role, transcription factor regulating the expression of cell cycle genes essential for DNA replication and mitosis. Plays a role in the control of cell proliferation. Also plays a role in DNA break repair, participating in the DNA damage checkpoint response. Promotes transcription of PHB2. The chain is Forkhead box protein M1 (Foxm1) from Rattus norvegicus (Rat).